The following is a 209-amino-acid chain: Uracil phosphoribosyltransferase (209 aa).

Residues R79, R104, and 131 to 139 each bind 5-phospho-alpha-D-ribose 1-diphosphate; that span reads DPMLATGGS. Uracil contacts are provided by residues I194 and 199–201; that span reads GDA. D200 lines the 5-phospho-alpha-D-ribose 1-diphosphate pocket.

It belongs to the UPRTase family. Mg(2+) is required as a cofactor.

The catalysed reaction is UMP + diphosphate = 5-phospho-alpha-D-ribose 1-diphosphate + uracil. It functions in the pathway pyrimidine metabolism; UMP biosynthesis via salvage pathway; UMP from uracil: step 1/1. Its activity is regulated as follows. Allosterically activated by GTP. Catalyzes the conversion of uracil and 5-phospho-alpha-D-ribose 1-diphosphate (PRPP) to UMP and diphosphate. This is Uracil phosphoribosyltransferase from Shouchella clausii (strain KSM-K16) (Alkalihalobacillus clausii).